We begin with the raw amino-acid sequence, 321 residues long: Lipoyl synthase (321 aa).

7 residues coordinate [4Fe-4S] cluster: Cys68, Cys73, Cys79, Cys94, Cys98, Cys101, and Ser308. The region spanning 80–297 (FNHGTATFMI…KAEALAMGFT (218 aa)) is the Radical SAM core domain.

This sequence belongs to the radical SAM superfamily. Lipoyl synthase family. The cofactor is [4Fe-4S] cluster.

The protein resides in the cytoplasm. The enzyme catalyses [[Fe-S] cluster scaffold protein carrying a second [4Fe-4S](2+) cluster] + N(6)-octanoyl-L-lysyl-[protein] + 2 oxidized [2Fe-2S]-[ferredoxin] + 2 S-adenosyl-L-methionine + 4 H(+) = [[Fe-S] cluster scaffold protein] + N(6)-[(R)-dihydrolipoyl]-L-lysyl-[protein] + 4 Fe(3+) + 2 hydrogen sulfide + 2 5'-deoxyadenosine + 2 L-methionine + 2 reduced [2Fe-2S]-[ferredoxin]. It participates in protein modification; protein lipoylation via endogenous pathway; protein N(6)-(lipoyl)lysine from octanoyl-[acyl-carrier-protein]: step 2/2. In terms of biological role, catalyzes the radical-mediated insertion of two sulfur atoms into the C-6 and C-8 positions of the octanoyl moiety bound to the lipoyl domains of lipoate-dependent enzymes, thereby converting the octanoylated domains into lipoylated derivatives. The chain is Lipoyl synthase from Escherichia fergusonii (strain ATCC 35469 / DSM 13698 / CCUG 18766 / IAM 14443 / JCM 21226 / LMG 7866 / NBRC 102419 / NCTC 12128 / CDC 0568-73).